Reading from the N-terminus, the 150-residue chain is C-type lectin 16 (150 aa).

The signal sequence occupies residues 1–27 (MKRVRVKVIFVSFGLLVVFLSLSGTAA). Disulfide bonds link Cys-29–Cys-40, Cys-57–Cys-146, and Cys-123–Cys-138. The region spanning 36–147 (YEGHCYKPFN…CRMLARFVCE (112 aa)) is the C-type lectin domain.

Belongs to the snaclec family. In terms of assembly, heteromultimer; disulfide-linked. As to expression, expressed by the venom gland.

Its subcellular location is the secreted. Its function is as follows. Interferes with one step of hemostasis (modulation of platelet aggregation, or coagulation cascade, for example). The chain is C-type lectin 16 from Crotalus adamanteus (Eastern diamondback rattlesnake).